Reading from the N-terminus, the 74-residue chain is Kappa-scoloptoxin(07)-Ssm2c (74 aa).

A signal peptide spans 1–19 (MLVFYAPLFVSIFSNTVMG). Positions 20-41 (ATIDKPIPKPILREAIEKIAVN) are excised as a propeptide.

This sequence belongs to the scoloptoxin-07 family. Contains 3 disulfide bonds. Expressed by the venom gland.

It localises to the secreted. Its function is as follows. Inhibits voltage-gated potassium channels. In Scolopendra mutilans (Chinese red-headed centipede), this protein is Kappa-scoloptoxin(07)-Ssm2c.